A 516-amino-acid chain; its full sequence is Acetylcholine receptor subunit delta (516 aa).

The N-terminal stretch at 1 to 21 is a signal peptide; it reads MEGSVLTLVLLAALVVCGSWG. Topologically, residues 22–244 are extracellular; sequence LNEEERLIRH…VTFYLIIRRK (223 aa). N-linked (GlcNAc...) asparagine glycans are attached at residues N96 and N163. C150 and C164 are disulfide-bonded. Helical transmembrane passes span 245 to 269, 279 to 296, and 311 to 332; these read PLFYVINILVPCVLISFMINLVFYL, MAISVLLAQSVFLLLISK, and FLLFGMVLVTMVVVICVIVLNI. Residues 333 to 470 are Cytoplasmic-facing; sequence HFRTPSTHVL…WNRVARTVDR (138 aa). A Phosphotyrosine; by Tyr-kinases modification is found at Y389. The chain crosses the membrane as a helical span at residues 471–493; sequence LCLFVVTPIMVVGTAWIFLQGAY.

The protein belongs to the ligand-gated ion channel (TC 1.A.9) family. Acetylcholine receptor (TC 1.A.9.1) subfamily. Delta/CHRND sub-subfamily. As to quaternary structure, pentamer of two alpha chains, and one each of the beta, delta, and gamma (in immature muscle) or epsilon (in mature muscle) chains. The muscle heteropentamer composed of alpha-1, beta-1, delta, epsilon subunits interacts with the alpha-conotoxin ImII.

The protein resides in the postsynaptic cell membrane. The protein localises to the cell membrane. The enzyme catalyses K(+)(in) = K(+)(out). It carries out the reaction Na(+)(in) = Na(+)(out). Its function is as follows. After binding acetylcholine, the AChR responds by an extensive change in conformation that affects all subunits and leads to opening of an ion-conducting channel across the plasma membrane. This is Acetylcholine receptor subunit delta (CHRND) from Bos taurus (Bovine).